Reading from the N-terminus, the 380-residue chain is Zinc finger protein neuro-d4 (380 aa).

The disordered stretch occupies residues 132-164; it reads ALLDCQKPPPGDFAHDAEGDEMEDDAPRRKNKA. Residues 190-213 form a C2H2-type zinc finger; sequence YVCDICGKRYKNRPGLSYHYTHTH. PHD-type zinc fingers lie at residues 262 to 321 and 318 to 368; these read EGPC…CKNC and CKNC…CLRQ. Residues Cys-265, Cys-268, Cys-286, Cys-289, His-294, Cys-297, Cys-315, Cys-318, Cys-321, Cys-324, Cys-336, Cys-339, His-344, Cys-347, Cys-362, and Cys-365 each coordinate Zn(2+).

It belongs to the requiem/DPF family. As to quaternary structure, component of neuron-specific chromatin remodeling complex (nBAF complex), a subfamily of ATP-dependent SWI/SNF chromatin remodeling complexes.

Its subcellular location is the cytoplasm. The protein localises to the nucleus. May have an important role in developing neurons by participating in regulation of cell survival, possibly as a neurospecific transcription factor. Belongs to the neuron-specific chromatin remodeling complex (nBAF complex) and plays a role in neural development. This Gallus gallus (Chicken) protein is Zinc finger protein neuro-d4.